Here is a 419-residue protein sequence, read N- to C-terminus: L-rhamnose isomerase (419 aa).

Residues histidine 262, aspartate 294, and aspartate 296 each coordinate Mn(2+).

This sequence belongs to the rhamnose isomerase family. Homotetramer. Mn(2+) serves as cofactor.

It localises to the cytoplasm. It carries out the reaction L-rhamnopyranose = L-rhamnulose. It functions in the pathway carbohydrate degradation; L-rhamnose degradation; glycerone phosphate from L-rhamnose: step 1/3. Functionally, catalyzes the interconversion of L-rhamnose and L-rhamnulose. This chain is L-rhamnose isomerase, found in Salmonella enteritidis PT4 (strain P125109).